A 326-amino-acid polypeptide reads, in one-letter code: Mitochondrial substrate carrier family protein R (326 aa).

Solcar repeat units lie at residues threonine 9–asparagine 95, lysine 101–isoleucine 214, and valine 226–tyrosine 318. Helical transmembrane passes span methionine 12–leucine 32, leucine 64–isoleucine 84, valine 104–leucine 124, glycine 185–tyrosine 205, valine 226–alanine 246, and leucine 290–leucine 310.

It belongs to the mitochondrial carrier (TC 2.A.29) family.

It is found in the mitochondrion inner membrane. In terms of biological role, mitochondrial solute carriers shuttle metabolites, nucleotides, and cofactors through the mitochondrial inner membrane. May be involved in the accumulation of coenzyme A in the mitochondrial matrix. The protein is Mitochondrial substrate carrier family protein R (mcfR) of Dictyostelium discoideum (Social amoeba).